A 296-amino-acid chain; its full sequence is uncharacterized protein (296 aa).

One can recognise an FAD-binding FR-type domain in the interval 1 to 95 (MYKIVSKKEL…VGPLGVPSEF (95 aa)).

This is an uncharacterized protein from Clostridium beijerinckii (Clostridium MP).